Reading from the N-terminus, the 161-residue chain is RNA pyrophosphohydrolase (161 aa).

A Nudix hydrolase domain is found at 12 to 154; the sequence is PYRPGVGMMI…KRKLYQAVVK (143 aa). The short motif at 46 to 67 is the Nudix box element; that stretch reads GGIVPGETPSIAAMREMLEEIG.

This sequence belongs to the Nudix hydrolase family. RppH subfamily. A divalent metal cation is required as a cofactor.

Accelerates the degradation of transcripts by removing pyrophosphate from the 5'-end of triphosphorylated RNA, leading to a more labile monophosphorylated state that can stimulate subsequent ribonuclease cleavage. This is RNA pyrophosphohydrolase from Rickettsia typhi (strain ATCC VR-144 / Wilmington).